The sequence spans 458 residues: ATP synthase subunit beta (458 aa).

Residue 148 to 155 coordinates ATP; that stretch reads GGAGVGKT.

It belongs to the ATPase alpha/beta chains family. In terms of assembly, F-type ATPases have 2 components, CF(1) - the catalytic core - and CF(0) - the membrane proton channel. CF(1) has five subunits: alpha(3), beta(3), gamma(1), delta(1), epsilon(1). CF(0) has three main subunits: a(1), b(2) and c(9-12). The alpha and beta chains form an alternating ring which encloses part of the gamma chain. CF(1) is attached to CF(0) by a central stalk formed by the gamma and epsilon chains, while a peripheral stalk is formed by the delta and b chains.

Its subcellular location is the cell inner membrane. It catalyses the reaction ATP + H2O + 4 H(+)(in) = ADP + phosphate + 5 H(+)(out). Its function is as follows. Produces ATP from ADP in the presence of a proton gradient across the membrane. The catalytic sites are hosted primarily by the beta subunits. The protein is ATP synthase subunit beta of Francisella tularensis subsp. holarctica (strain FTNF002-00 / FTA).